The sequence spans 469 residues: MDESVDRVLAGKYPAKAHAKRVAARIRELGYGESGVIYLEGQKTQMIEDNDGSMPFRQRRNFFYLSGCPLPDSYLTYNIEEDHLTLFIPPIDEDSVIWSGLPLSPDEALEMYDVDAVLLTTDVNTSLAHFCSVKKGKKVFAIADQVSPHITFLPFQETDFDVLKRAAEESRVVKDTYEIALLRRANEISTKAHVAVIKAARSAANERELEAIFIATCMSYGCREQSYHPIFASGTNAATLHYQNNNEDLVDKTTGEKRLNMLVDAGGEYRTYCADITRVVPLSGKFSAESRQIYDIVLDMQMTSLAMIRAGVMWEDVHSNSHRVAIRGLLKLGILRGTEEELFDKGISVAFFPHGVGHYLGMDTHDTGGNPNYKDENPKFKYLRLRGTLACGAVVTVEPGIYFCRFIIDPYLASPELGKYIDTNVLERYWNVGGVRIEDNVVVTQNGHDNLTAAPKIPEEIEKLVAAAQ.

Positions 264, 275, 398, and 438 each coordinate Mn(2+).

The protein belongs to the peptidase M24B family. Mn(2+) serves as cofactor.

The enzyme catalyses Release of any N-terminal amino acid, including proline, that is linked to proline, even from a dipeptide or tripeptide.. Functionally, catalyzes the removal of a penultimate prolyl residue from the N-termini of peptides. The sequence is that of Probable Xaa-Pro aminopeptidase PEPP (PEPP) from Ajellomyces capsulatus (strain G186AR / H82 / ATCC MYA-2454 / RMSCC 2432) (Darling's disease fungus).